Reading from the N-terminus, the 349-residue chain is NADH-quinone oxidoreductase subunit H (349 aa).

Transmembrane regions (helical) follow at residues 19 to 39 (VWTL…VAYL), 88 to 108 (GLFI…WAVV), 123 to 143 (LLFL…AGWA), 161 to 181 (VSYE…SASL), 202 to 222 (FLSW…ISGI), 249 to 269 (GMAF…VSIL), 284 to 304 (FLPD…FVFL), and 325 to 345 (VFIP…MSPL).

Belongs to the complex I subunit 1 family. As to quaternary structure, NDH-1 is composed of 14 different subunits. Subunits NuoA, H, J, K, L, M, N constitute the membrane sector of the complex.

Its subcellular location is the cell inner membrane. It catalyses the reaction a quinone + NADH + 5 H(+)(in) = a quinol + NAD(+) + 4 H(+)(out). In terms of biological role, NDH-1 shuttles electrons from NADH, via FMN and iron-sulfur (Fe-S) centers, to quinones in the respiratory chain. The immediate electron acceptor for the enzyme in this species is believed to be ubiquinone. Couples the redox reaction to proton translocation (for every two electrons transferred, four hydrogen ions are translocated across the cytoplasmic membrane), and thus conserves the redox energy in a proton gradient. This subunit may bind ubiquinone. This is NADH-quinone oxidoreductase subunit H from Aromatoleum aromaticum (strain DSM 19018 / LMG 30748 / EbN1) (Azoarcus sp. (strain EbN1)).